The sequence spans 346 residues: Glucose-6-phosphatase 3 (346 aa).

The Lumenal portion of the chain corresponds to Met1–Asn24. A helical transmembrane segment spans residues Met25–Ala45. Topologically, residues Ala46–Ser56 are cytoplasmic. Residues Val57–Gly77 form a helical membrane-spanning segment. Residues Asp78–Pro108 are Lumenal-facing. A substrate-binding site is contributed by Arg79. A helical transmembrane segment spans residues Gly109–Ile129. His114 (proton donor) is an active-site residue. Topologically, residues Ser130 to Arg138 are cytoplasmic. Residues Ser139–Leu159 traverse the membrane as a helical segment. At Ser160–His167 the chain is on the lumenal side. Arg161 is a substrate binding site. His167 acts as the Nucleophile in catalysis. Residues Phe168 to Met186 traverse the membrane as a helical segment. Residues Ser187–Ser197 lie on the Cytoplasmic side of the membrane. The helical transmembrane segment at Phe198–Phe218 threads the bilayer. Over Thr219–Asp254 the chain is Lumenal. A helical membrane pass occupies residues Ser255 to Ile273. The Cytoplasmic segment spans residues Arg274–Lys283. The chain crosses the membrane as a helical span at residues Ile284–Pro304. Residues Gln305–Ser307 are Lumenal-facing. The helical transmembrane segment at Leu308–Val328 threads the bilayer. Over Pro329–Ser346 the chain is Cytoplasmic.

It belongs to the glucose-6-phosphatase family. In terms of tissue distribution, widely expressed. Highly expressed in heart and testis and to a lower extent in spleen, stomach, small intestine, skeletal muscle and uterus. Expressed in muscle, brain, thymus, lung, kidney, spleen and pancreas (at protein level). In the brain, expressed in astrocytes (at protein level).

Its subcellular location is the endoplasmic reticulum membrane. The enzyme catalyses D-glucose 6-phosphate + H2O = D-glucose + phosphate. It functions in the pathway carbohydrate biosynthesis; gluconeogenesis. Inhibited by vanadate. In terms of biological role, hydrolyzes glucose-6-phosphate to glucose in the endoplasmic reticulum. May form with the glucose-6-phosphate transporter (SLC37A4/G6PT) a ubiquitously expressed complex responsible for glucose production through glycogenolysis and gluconeogenesis. Probably required for normal neutrophil function. The protein is Glucose-6-phosphatase 3 (G6pc3) of Mus musculus (Mouse).